A 169-amino-acid chain; its full sequence is UPF0398 protein Spy49_1277c (169 aa).

It belongs to the UPF0398 family.

This chain is UPF0398 protein Spy49_1277c, found in Streptococcus pyogenes serotype M49 (strain NZ131).